Reading from the N-terminus, the 472-residue chain is Serine/threonine-protein kinase ULK3 (472 aa).

The Protein kinase domain occupies phenylalanine 14–valine 270. Residues leucine 20 to valine 28 and lysine 44 contribute to the ATP site. The Proton acceptor role is filled by aspartate 137. Serine 176 carries the phosphoserine modification. In terms of domain architecture, MIT 1 spans serine 280 to valine 348. Phosphoserine; by autocatalysis is present on residues serine 350, serine 384, and serine 464. The MIT 2 domain maps to arginine 375 to isoleucine 444.

Belongs to the protein kinase superfamily. Ser/Thr protein kinase family. APG1/unc-51/ULK1 subfamily. As to quaternary structure, interacts (via protein kinase domain) with SUFU. In terms of processing, autophosphorylated. Autophosphorylation is blocked by interaction with SUFU.

The protein localises to the cytoplasm. The enzyme catalyses L-seryl-[protein] + ATP = O-phospho-L-seryl-[protein] + ADP + H(+). The catalysed reaction is L-threonyl-[protein] + ATP = O-phospho-L-threonyl-[protein] + ADP + H(+). Its function is as follows. Serine/threonine protein kinase that acts as a regulator of Sonic hedgehog (SHH) signaling and autophagy. Acts as a negative regulator of SHH signaling in the absence of SHH ligand: interacts with SUFU, thereby inactivating the protein kinase activity and preventing phosphorylation of GLI proteins (GLI1, GLI2 and/or GLI3). Positively regulates SHH signaling in the presence of SHH: dissociates from SUFU, autophosphorylates and mediates phosphorylation of GLI2, activating it and promoting its nuclear translocation. Phosphorylates in vitro GLI2, as well as GLI1 and GLI3, although less efficiently. Also acts as a regulator of autophagy: following cellular senescence, able to induce autophagy. In Mus musculus (Mouse), this protein is Serine/threonine-protein kinase ULK3 (Ulk3).